The chain runs to 158 residues: Ribonuclease H (158 aa).

Positions 3-144 (ELKLIHIFTD…CDQLARAAAE (142 aa)) constitute an RNase H type-1 domain. Aspartate 12, glutamate 50, aspartate 72, and aspartate 136 together coordinate Mg(2+).

It belongs to the RNase H family. As to quaternary structure, monomer. Mg(2+) is required as a cofactor.

The protein localises to the cytoplasm. It catalyses the reaction Endonucleolytic cleavage to 5'-phosphomonoester.. In terms of biological role, endonuclease that specifically degrades the RNA of RNA-DNA hybrids. The protein is Ribonuclease H of Shewanella sp. (strain MR-4).